The chain runs to 103 residues: Large ribosomal subunit protein bL21 (103 aa).

This sequence belongs to the bacterial ribosomal protein bL21 family. Part of the 50S ribosomal subunit. Contacts protein L20.

In terms of biological role, this protein binds to 23S rRNA in the presence of protein L20. The protein is Large ribosomal subunit protein bL21 of Psychrobacter arcticus (strain DSM 17307 / VKM B-2377 / 273-4).